Consider the following 1024-residue polypeptide: Beta-galactosidase (1024 aa).

Substrate contacts are provided by N103 and D202. D202 contributes to the Na(+) binding site. 3 residues coordinate Mg(2+): E417, H419, and E462. Residues E462 and 538–541 (EYAH) each bind substrate. E462 (proton donor) is an active-site residue. Catalysis depends on E538, which acts as the Nucleophile. N598 contributes to the Mg(2+) binding site. Residues F602 and N605 each contribute to the Na(+) site. Substrate contacts are provided by N605 and W1000.

This sequence belongs to the glycosyl hydrolase 2 family. As to quaternary structure, homotetramer. Mg(2+) serves as cofactor. It depends on Na(+) as a cofactor.

It catalyses the reaction Hydrolysis of terminal non-reducing beta-D-galactose residues in beta-D-galactosides.. The polypeptide is Beta-galactosidase (Klebsiella pneumoniae).